Reading from the N-terminus, the 294-residue chain is MNARAESLPTVASDLISLTKPRLSSLVLVTAAGGMWLAPGHMGAVNALVTLLATAGTVGAANALNCYWERHSDQFMDRTRNRPLPSGRMEPAVALWFGISLAAVSLPALALGANVLTAALGLVALLSYVLAYTPLKARTSAAMLVGGVPGALPPLMGWTAVTNQMDVGGFSLFAIMFLWQMPHFIAIALFRKEEYRAAGLTSVPLERGDESSRAQVVLYLVALIPMTLLPFQLHIAGAWYLAAAVLLGLSFLGLGAWGFFRRLGNTWARQTFFFSLIYLTGLFAALALDRVPRE.

9 helical membrane-spanning segments follow: residues 25-45, 48-68, 92-112, 115-135, 141-161, 170-190, 216-236, 240-260, and 272-292; these read SLVL…MGAV, LVTL…NCYW, AVAL…LALG, VLTA…YTPL, AAML…WTAV, FSLF…IALF, VVLY…LHIA, YLAA…WGFF, and FFFS…DRVP.

It belongs to the UbiA prenyltransferase family. Protoheme IX farnesyltransferase subfamily.

It is found in the cell inner membrane. It catalyses the reaction heme b + (2E,6E)-farnesyl diphosphate + H2O = Fe(II)-heme o + diphosphate. It participates in porphyrin-containing compound metabolism; heme O biosynthesis; heme O from protoheme: step 1/1. Functionally, converts heme B (protoheme IX) to heme O by substitution of the vinyl group on carbon 2 of heme B porphyrin ring with a hydroxyethyl farnesyl side group. This is Protoheme IX farnesyltransferase from Myxococcus xanthus (strain DK1622).